A 74-amino-acid polypeptide reads, in one-letter code: Protein SlyX homolog (74 aa).

The protein belongs to the SlyX family.

In Neisseria meningitidis serogroup C / serotype 2a (strain ATCC 700532 / DSM 15464 / FAM18), this protein is Protein SlyX homolog.